Reading from the N-terminus, the 544-residue chain is Cannabidiolic acid synthase (544 aa).

An N-terminal signal peptide occupies residues 1-28 (MKCSTFSFWFVCKIIFFFFSFNIQTSIA). A disulfide bridge links C37 with C99. N-linked (GlcNAc...) asparagine glycosylation is found at N45 and N65. One can recognise an FAD-binding PCMH-type domain in the interval 77 to 251 (TTPKPLVIVT…VAWKIRLVAV (175 aa)). FAD is bound by residues 109–115 (TRSGGHD) and S120. A cross-link (6-(S-cysteinyl)-8alpha-(pros-histidyl)-FAD (His-Cys)) is located at residues 114 to 176 (HDSEGMSYIS…ENLSLAAGYC (63 aa)). N-linked (GlcNAc...) asparagine glycosylation is present at N168. FAD contacts are provided by residues C176, 180-184 (CAGGH), Y190, E236, and I241. H291 provides a ligand contact to cannabigerolate. N296, N304, and N328 each carry an N-linked (GlcNAc...) asparagine glycan. Cannabigerolate is bound by residues Y416 and E441. Residue 480-482 (YLN) participates in FAD binding. The active-site Proton acceptor is Y483. N-linked (GlcNAc...) asparagine glycosylation occurs at N498.

It belongs to the oxygen-dependent FAD-linked oxidoreductase family. In terms of assembly, monomer. FAD is required as a cofactor. Post-translationally, glycosylated. In terms of processing, the FAD cofactor is bound via a bicovalent 6-S-cysteinyl, 8alpha-N1-histidyl FAD linkage. As to expression, expressed in young leaves.

It is found in the secreted. The protein localises to the extracellular space. Its subcellular location is the apoplast. It carries out the reaction cannabigerolate + O2 = cannabidiolate + H2O2. It functions in the pathway secondary metabolite biosynthesis; terpenoid biosynthesis. With respect to regulation, inhibited by Hg(2+). Functionally, oxidoreductase involved in the biosynthesis of cannabinoids-related terpenophenolic natural products, which have pharmacological activity. Catalyzes the stereoselective oxidative cyclization of the monoterpene moiety in cannabigerolic acid (CBGA), producing cannabidiolate (CBDA), the major cannabioid in fiber-type Cannabis plants. Can also use cannabinerolic acid as substrate, but not cannabigerol or cannabinerol. This chain is Cannabidiolic acid synthase, found in Cannabis sativa (Hemp).